The sequence spans 374 residues: 3-dehydroquinate synthase (374 aa).

Belongs to the archaeal-type DHQ synthase family.

The catalysed reaction is 2-amino-2,3,7-trideoxy-D-lyxo-hept-6-ulosonate + NAD(+) + H2O = 3-dehydroquinate + NH4(+) + NADH + H(+). Its function is as follows. Catalyzes the oxidative deamination and cyclization of 2-amino-3,7-dideoxy-D-threo-hept-6-ulosonic acid (ADH) to yield 3-dehydroquinate (DHQ), which is fed into the canonical shikimic pathway of aromatic amino acid biosynthesis. The sequence is that of 3-dehydroquinate synthase from Methanocella arvoryzae (strain DSM 22066 / NBRC 105507 / MRE50).